The primary structure comprises 478 residues: Chromosomal replication initiator protein DnaA (478 aa).

Positions 1–95 (MNKTLNPQEV…DVLEKEITEE (95 aa)) are domain I, interacts with DnaA modulators. The tract at residues 96 to 141 (INDLVQSMEEEDFALIDHTKPVIPNFFDQNTRVNFGGGPNNHHPTT) is domain II. Residues 142 to 358 (GVNPRFTFDN…GALLRIFALA (217 aa)) are domain III, AAA+ region. ATP is bound by residues Gly-186, Gly-188, Lys-189, and Thr-190. Positions 359–478 (SFNKEEINMT…YKLTQFILRR (120 aa)) are domain IV, binds dsDNA.

This sequence belongs to the DnaA family. Oligomerizes as a right-handed, spiral filament on DNA at oriC.

Its subcellular location is the cytoplasm. Plays an essential role in the initiation and regulation of chromosomal replication. ATP-DnaA binds to the origin of replication (oriC) to initiate formation of the DNA replication initiation complex once per cell cycle. Binds the DnaA box (a 9 base pair repeat at the origin) and separates the double-stranded (ds)DNA. Forms a right-handed helical filament on oriC DNA; dsDNA binds to the exterior of the filament while single-stranded (ss)DNA is stabiized in the filament's interior. The ATP-DnaA-oriC complex binds and stabilizes one strand of the AT-rich DNA unwinding element (DUE), permitting loading of DNA polymerase. After initiation quickly degrades to an ADP-DnaA complex that is not apt for DNA replication. Binds acidic phospholipids. The sequence is that of Chromosomal replication initiator protein DnaA from Tropheryma whipplei (strain TW08/27) (Whipple's bacillus).